We begin with the raw amino-acid sequence, 162 residues long: HTH-type transcriptional regulator IscR (162 aa).

The HTH rrf2-type domain maps to 2–131 (RLTSKGRYAV…NNITLGELVN (130 aa)). Positions 28–51 (LADISERQGISLSYLEQLFSRLRK) form a DNA-binding region, H-T-H motif. The [2Fe-2S] cluster site is built by cysteine 92, cysteine 98, and cysteine 104. Residues 141 to 162 (RQHNEAHRPTRAQDAIDVKLRA) form a disordered region.

Requires [2Fe-2S] cluster as cofactor.

Functionally, regulates the transcription of several operons and genes involved in the biogenesis of Fe-S clusters and Fe-S-containing proteins. In Cronobacter sakazakii (strain ATCC BAA-894) (Enterobacter sakazakii), this protein is HTH-type transcriptional regulator IscR.